Reading from the N-terminus, the 245-residue chain is MDGFNPRATTVAEYMDGTPKFRTDLYASTCGQLLSHKEYMRVVDMYGLKFTPELKAPEVPMPFMGKYSQEQYAQQLIDEYRAARISPDRVFLQSFSIDDIYFWNRHDADYARQAMFLDSRPDTPEGARQATATMAQLKQSGIRTLSPAFHALLKLDAGNNIVPSDYAVAAKKAGIKLTTWSLERSGPLNKVRASGDFYYSSIAAAIKDDGDIYRVVDVLAQKVGVAGIFSDWPATVSFYANCFNL.

Its subcellular location is the secreted. This chain is Extracellular protein ARB_04177, found in Arthroderma benhamiae (strain ATCC MYA-4681 / CBS 112371) (Trichophyton mentagrophytes).